A 757-amino-acid chain; its full sequence is Chloride anion exchanger (757 aa).

Topologically, residues 1–71 are cytoplasmic; sequence MIEAIGNQYV…SWLPAYKIKE (71 aa). Residues 72–92 form a helical membrane-spanning segment; it reads WLLSDIVSGISTGLVAVLQGL. Residue A93 is a topological domain, extracellular. The chain crosses the membrane as a helical span at residues 94–114; the sequence is FALLVNIPPAYGLYAAFFPVI. Residues 115 to 124 are Cytoplasmic-facing; it reads TYFFLGTSRH. A helical transmembrane segment spans residues 125 to 145; it reads ISVGPFPVLSMMVGVVVTRVA. Over 146 to 176 the chain is Extracellular; that stretch reads SGSDTSPALSSSSAENDSMIEEKVMVAASVT. N161 carries an N-linked (GlcNAc...) asparagine glycan. A helical membrane pass occupies residues 177–197; sequence VLSGIIQLLLGVLQIGFVVIY. Over 198–201 the chain is Cytoplasmic; the sequence is LSES. A helical transmembrane segment spans residues 202–222; that stretch reads LISGFTTAAAIHVLVSQLKFM. Over 223-250 the chain is Extracellular; the sequence is LQLTVPAHSDPFSIFKVLESVFSQIQKT. A helical membrane pass occupies residues 251-271; it reads NIADLVTSVIILVVVFVVKEI. Residues 272–278 lie on the Cytoplasmic side of the membrane; the sequence is NQRYRSK. A helical transmembrane segment spans residues 279–299; that stretch reads LPVPIPIELIMTVIATGISYG. Over 300–335 the chain is Extracellular; it reads CNFEQRFGVAVVGNMSLGFQPPITPSVEVFQDTIGD. Residues 336-356 form a helical membrane-spanning segment; the sequence is CFGIAIVGFAVAFSVASVYSL. Topologically, residues 357–367 are cytoplasmic; sequence KYDYPIDGNQE. The chain crosses the membrane as a helical span at residues 368–388; the sequence is LIALGVSNIFTGAFKGFAGST. Over 389-404 the chain is Extracellular; it reads ALSRSGVQESTGGKTQ. A helical membrane pass occupies residues 405–425; it reads VAGLLSAVIVLIVIVAIGFLL. Topologically, residues 426–462 are cytoplasmic; the sequence is QPLQKSVLAALALGNLKGMLMQFAEIGRLWKKDKYDC. A helical membrane pass occupies residues 463 to 483; the sequence is LIWIMTFIFAIVLGLGLGLAA. Residues 484–757 are Extracellular-facing; the sequence is SVAFQLLTIV…ECQVPVETKF (274 aa). The STAS domain maps to 518 to 713; it reads NYADVYEPEG…LTIHDAILHI (196 aa). Positions 754-757 match the PDZ-binding motif; that stretch reads ETKF.

The protein belongs to the SLC26A/SulP transporter (TC 2.A.53) family. In terms of assembly, interacts with PDZK1, CFTR, SLC26A6 and NHERF1. Interacts (via PDZ-binding motif) with NHERF4 (via the third PDZ domain); interaction leads to decreased expression of SLC26A3 on the cell membrane resulting in its reduced exchanger activity. Post-translationally, N-glycosylation is required for efficient cell surface expression, and protection from proteolytic degradation.

The protein resides in the apical cell membrane. It is found in the membrane. Its subcellular location is the cell membrane. The catalysed reaction is hydrogencarbonate(in) + 2 chloride(out) = hydrogencarbonate(out) + 2 chloride(in). In terms of biological role, mediates chloride-bicarbonate exchange with a chloride bicarbonate stoichiometry of 2:1 in the intestinal epithelia. Plays a role in the chloride and bicarbonate homeostasis during sperm epididymal maturation and capacitation. In Rattus norvegicus (Rat), this protein is Chloride anion exchanger (Slc26a3).